The primary structure comprises 368 residues: 2-aminoethylphosphonate--pyruvate transaminase (368 aa).

Lys-192 carries the N6-(pyridoxal phosphate)lysine modification.

It belongs to the class-V pyridoxal-phosphate-dependent aminotransferase family. PhnW subfamily. As to quaternary structure, homodimer. Pyridoxal 5'-phosphate serves as cofactor.

It carries out the reaction (2-aminoethyl)phosphonate + pyruvate = phosphonoacetaldehyde + L-alanine. Its function is as follows. Involved in phosphonate degradation. This is 2-aminoethylphosphonate--pyruvate transaminase from Pseudomonas putida (strain GB-1).